A 726-amino-acid polypeptide reads, in one-letter code: Kinesin-like protein KIN-10B (726 aa).

Disordered stretches follow at residues 1–20 (MEQQ…RVVA), 60–82 (AATA…QQQK), and 402–423 (KNAR…TANR). Residues 15–359 (GVRVVARICP…LALASRSSQV (345 aa)) enclose the Kinesin motor domain. Positions 408–423 (FNNSGVKGGQTPTANR) are enriched in polar residues.

The protein belongs to the TRAFAC class myosin-kinesin ATPase superfamily. Kinesin family. KIN-10 subfamily.

The sequence is that of Kinesin-like protein KIN-10B from Oryza sativa subsp. japonica (Rice).